Reading from the N-terminus, the 52-residue chain is Venom peptide 4b (52 aa).

An N-terminal signal peptide occupies residues 1-23 (MRSAILLVIVAIVAILGFLGVNA). 3 AXPX repeats span residues 23 to 26 (AEPL), 31 to 34 (AEPN), and 39 to 42 (AAPL). A propeptide spanning residues 24 to 41 (EPLPSPLAEPNPHAKAAP) is cleaved from the precursor. Residues 30–52 (LAEPNPHAKAAPLSPAAMASLAG) are disordered. A compositionally biased stretch (low complexity) spans 37–52 (AKAAPLSPAAMASLAG). Ala51 bears the Alanine amide mark.

Expressed by the venom gland.

It localises to the secreted. The polypeptide is Venom peptide 4b (Eumenes pomiformis (Potter wasp)).